The primary structure comprises 209 residues: UPF0502 protein mll4256 (209 aa).

The protein belongs to the UPF0502 family.

The protein is UPF0502 protein mll4256 of Mesorhizobium japonicum (strain LMG 29417 / CECT 9101 / MAFF 303099) (Mesorhizobium loti (strain MAFF 303099)).